A 452-amino-acid polypeptide reads, in one-letter code: Putative zinc metalloprotease VC_2253 (452 aa).

Histidine 22 is a Zn(2+) binding site. The active site involves glutamate 23. Residue histidine 26 participates in Zn(2+) binding. The chain crosses the membrane as a helical span at residues 98–120 (SAIVSAGPIFNFLFAIFAYWLVF). A PDZ domain is found at 197–292 (NLRDWNFDPE…QVELTLIPDS (96 aa)). Helical transmembrane passes span 378–400 (FVYF…LVPL) and 428–447 (MGYR…AIFN).

Belongs to the peptidase M50B family. Requires Zn(2+) as cofactor.

It localises to the cell inner membrane. The protein is Putative zinc metalloprotease VC_2253 of Vibrio cholerae serotype O1 (strain ATCC 39315 / El Tor Inaba N16961).